Here is a 417-residue protein sequence, read N- to C-terminus: Phosphoribosylamine--glycine ligase (417 aa).

The region spanning 108-307 (KRIMDEAGVP…LSTLLFAAAT (200 aa)) is the ATP-grasp domain. 134–188 (LDEFGAPYVVKADGLAAGKGVIVTEDRAAALAHAARYLTHGSVLVEEFLDGEEVS) is a binding site for ATP. Residues Glu-277 and Asn-279 each coordinate Mg(2+).

Belongs to the GARS family. It depends on Mg(2+) as a cofactor. Mn(2+) is required as a cofactor.

The enzyme catalyses 5-phospho-beta-D-ribosylamine + glycine + ATP = N(1)-(5-phospho-beta-D-ribosyl)glycinamide + ADP + phosphate + H(+). It functions in the pathway purine metabolism; IMP biosynthesis via de novo pathway; N(1)-(5-phospho-D-ribosyl)glycinamide from 5-phospho-alpha-D-ribose 1-diphosphate: step 2/2. The polypeptide is Phosphoribosylamine--glycine ligase (Leifsonia xyli subsp. xyli (strain CTCB07)).